We begin with the raw amino-acid sequence, 139 residues long: Holo-[acyl-carrier-protein] synthase (139 aa).

2 residues coordinate Mg(2+): aspartate 8 and glutamate 61.

It belongs to the P-Pant transferase superfamily. AcpS family. Requires Mg(2+) as cofactor.

It localises to the cytoplasm. The catalysed reaction is apo-[ACP] + CoA = holo-[ACP] + adenosine 3',5'-bisphosphate + H(+). Transfers the 4'-phosphopantetheine moiety from coenzyme A to a Ser of acyl-carrier-protein. This chain is Holo-[acyl-carrier-protein] synthase, found in Rhodopseudomonas palustris (strain BisB5).